The chain runs to 185 residues: Putative manganese efflux pump MntP (185 aa).

6 helical membrane-spanning segments follow: residues 4 to 24 (LTSS…ALAI), 36 to 56 (ALVI…AGWI), 65 to 85 (ISSY…IKMI), 105 to 125 (VILL…SFGV), 130 to 150 (VLMP…AGVF), and 165 to 185 (IFGG…ILPL).

It belongs to the MntP (TC 9.B.29) family.

The protein resides in the cell membrane. In terms of biological role, probably functions as a manganese efflux pump. In Methanoregula boonei (strain DSM 21154 / JCM 14090 / 6A8), this protein is Putative manganese efflux pump MntP.